The chain runs to 474 residues: Glutamate--tRNA ligase (474 aa).

The 'HIGH' region signature appears at 9–19; that stretch reads PSPTGYLHVGG. Residues 240–244 carry the 'KMSKS' region motif; the sequence is KLSKR. Lys243 is an ATP binding site.

This sequence belongs to the class-I aminoacyl-tRNA synthetase family. Glutamate--tRNA ligase type 1 subfamily. In terms of assembly, monomer.

Its subcellular location is the cytoplasm. It catalyses the reaction tRNA(Glu) + L-glutamate + ATP = L-glutamyl-tRNA(Glu) + AMP + diphosphate. Catalyzes the attachment of glutamate to tRNA(Glu) in a two-step reaction: glutamate is first activated by ATP to form Glu-AMP and then transferred to the acceptor end of tRNA(Glu). This chain is Glutamate--tRNA ligase, found in Vibrio vulnificus (strain YJ016).